The chain runs to 1235 residues: Structural maintenance of chromosomes protein 1B (1235 aa).

Residue 32–39 (GPNGSGKS) coordinates ATP. The stretch at 156–490 (EEISTSGELI…RSELQNAGID (335 aa)) forms a coiled coil. Residues 514 to 629 (SVFGRLFDLC…ETMEEARHIA (116 aa)) enclose the SMC hinge domain. Lys-648 and Lys-713 each carry N6-acetyllysine. Coiled-coil stretches lie at residues 666 to 934 (WDEK…LDCK), 970 to 994 (EKEE…SDQE), and 1022 to 1049 (RALE…KEAR). Lys-1033 carries the N6-acetyllysine modification.

This sequence belongs to the SMC family. SMC1 subfamily. Forms a heterodimer with SMC3. Component of a meiosis-specific cohesin complex, probably composed of the SMC1B and SMC3 heterodimer attached via their SMC hinge domain, RAD21 (or its meiosis-specific related protein REC8), which link them, and STAG3, which interacts with RAD21 or REC8. The cohesin complex interacts with the cohesin loading complex subunits NIPBL/Scc2 (via HEAT repeats) and MAU2/Scc4. NIPBL directly contacts all members of the complex, RAD21, SMC1A/B, SMC3 and STAG1.

Its subcellular location is the nucleus. It is found in the chromosome. It localises to the centromere. In terms of biological role, meiosis-specific component of cohesin complex. Required for the maintenance of meiotic cohesion, but not, or only to a minor extent, for its establishment. Contributes to axial element (AE) formation and the organization of chromatin loops along the AE. Plays a key role in synapsis, recombination and chromosome movements. The cohesin complex is required for the cohesion of sister chromatids after DNA replication. The cohesin complex apparently forms a large proteinaceous ring within which sister chromatids can be trapped. At anaphase, the complex is cleaved and dissociates from chromatin, allowing sister chromatids to segregate. The meiosis-specific cohesin complex probably replaces mitosis specific cohesin complex when it dissociates from chromatin during prophase I. This chain is Structural maintenance of chromosomes protein 1B (SMC1B), found in Homo sapiens (Human).